A 213-amino-acid chain; its full sequence is U1 small nuclear ribonucleoprotein C (213 aa).

A Matrin-type zinc finger spans residues 4-36 (YYCDYCDTYLTHDSPSVRKQHNAGYKHKANVRS). Positions 143 to 166 (APSMPMPPLNSLPRPPTMNVPPAV) are enriched in pro residues. Residues 143-213 (APSMPMPPLN…INAQGPEANH (71 aa)) form a disordered region. Residues 167 to 180 (PGSTSTPTSGGAPS) are compositionally biased toward low complexity.

This sequence belongs to the U1 small nuclear ribonucleoprotein C family. As to quaternary structure, U1 snRNP is composed of the 7 core Sm proteins B/B', D1, D2, D3, E, F and G that assemble in a heptameric protein ring on the Sm site of the small nuclear RNA to form the core snRNP, and at least 3 U1 snRNP-specific proteins U1-70K, U1-A and U1-C. U1-C interacts with U1 snRNA and the 5' splice-site region of the pre-mRNA.

It localises to the nucleus. Component of the spliceosomal U1 snRNP, which is essential for recognition of the pre-mRNA 5' splice-site and the subsequent assembly of the spliceosome. U1-C is directly involved in initial 5' splice-site recognition for both constitutive and regulated alternative splicing. The interaction with the 5' splice-site seems to precede base-pairing between the pre-mRNA and the U1 snRNA. Stimulates commitment or early (E) complex formation by stabilizing the base pairing of the 5' end of the U1 snRNA and the 5' splice-site region. This Vitis vinifera (Grape) protein is U1 small nuclear ribonucleoprotein C.